Consider the following 396-residue polypeptide: MADKGLEDVPEGQIESNYDETTDSFDAMNLKAELLRGVYAYGFERPSAIQQRAIMPVIKGHDVIAQAQSGTGKTATFSISTLQKIDSNVKACQALILAPTRELAQQIQKVVVAIGDFMDVACHACIGGTSVRDDMKALQDGPQVVVGTPGRVHDMIQRRVLKTDHMKMFVLDEADEMLSRGFTEQIYDIFQLLPQSTQVVLLSATMPQDVLEVTTKFMRDPVRILVKKDELTLEGIKQFYIAVEKEDWKLDTLSDLYETVTITQAVIFCNTRRKVDWLTDKLTARDFTVSAMHGDMDQAQRDVIMKEFRSGSSRVLIATDLLARGIDVQQVSLVINYDLPANRENYIHRIGRGGRFGRKGVAINFVTADDVRMMREIEQFYSTQIEEMPMNVADLI.

Positions 1–20 are disordered; it reads MADKGLEDVPEGQIESNYDE. The short motif at 23 to 51 is the Q motif element; that stretch reads DSFDAMNLKAELLRGVYAYGFERPSAIQQ. Positions 54–224 constitute a Helicase ATP-binding domain; the sequence is IMPVIKGHDV…TKFMRDPVRI (171 aa). Position 67–74 (67–74) interacts with ATP; it reads AQSGTGKT. Positions 172-175 match the DEAD box motif; sequence DEAD. The Helicase C-terminal domain occupies 235–396; the sequence is GIKQFYIAVE…EMPMNVADLI (162 aa).

It belongs to the DEAD box helicase family. eIF4A subfamily. Component of the eIF4F complex, which composition varies with external and internal environmental conditions. It is composed of at least eIF4A, eIF4E and eIF4G.

The protein localises to the cytoplasm. It catalyses the reaction ATP + H2O = ADP + phosphate + H(+). ATP-dependent RNA helicase which is a subunit of the eIF4F complex involved in cap recognition and is required for mRNA binding to ribosome. In the current model of translation initiation, eIF4A unwinds RNA secondary structures in the 5'-UTR of mRNAs which is necessary to allow efficient binding of the small ribosomal subunit, and subsequent scanning for the initiator codon. In Phaeosphaeria nodorum (strain SN15 / ATCC MYA-4574 / FGSC 10173) (Glume blotch fungus), this protein is ATP-dependent RNA helicase eIF4A (TIF1).